The following is a 323-amino-acid chain: Sphingolipid delta(4)-desaturase DES1 (323 aa).

Residue glycine 2 is the site of N-myristoyl glycine attachment. A run of 2 helical transmembrane segments spans residues 41–61 and 68–88; these read PNLI…FYIV and WVIF…TLGI. Residues 89-93 carry the Histidine box-1 motif; sequence HEIAH. The chain crosses the membrane as a helical span at residues 107 to 127; that stretch reads WFGMFANLPIGIPYSVSFKSY. The Histidine box-2 motif lies at 128 to 132; that stretch reads HMDHH. Transmembrane regions (helical) follow at residues 152-172, 184-204, and 209-229; these read FFCT…FYAF, YLEV…YYFL, and LVYM…SGHF. The Histidine box-3 signature appears at 259 to 263; sequence HNEHH. The residue at position 307 (serine 307) is a Phosphoserine.

The protein belongs to the fatty acid desaturase type 1 family. DEGS subfamily. In terms of assembly, interacts with RLBP1; the interaction increases synthesis of chromophore-precursors by DEGS1. Post-translationally, myristoylation can target the enzyme to the mitochondria leading to an increase in ceramide levels.

It localises to the mitochondrion membrane. It is found in the endoplasmic reticulum membrane. It catalyses the reaction an N-acylsphinganine + 2 Fe(II)-[cytochrome b5] + O2 + 2 H(+) = an N-acylsphing-4-enine + 2 Fe(III)-[cytochrome b5] + 2 H2O. The catalysed reaction is all-trans-retinol = 11-cis-retinol. It carries out the reaction all-trans-retinol = 9-cis-retinol. The enzyme catalyses all-trans-retinol = 13-cis-retinol. It catalyses the reaction 11-cis-retinol = 13-cis-retinol. The catalysed reaction is 11-cis-retinol = 9-cis-retinol. Has sphingolipid-delta-4-desaturase activity. Converts D-erythro-sphinganine to D-erythro-sphingosine (E-sphing-4-enine). Catalyzes the equilibrium isomerization of retinols. The protein is Sphingolipid delta(4)-desaturase DES1 (DEGS1) of Pongo abelii (Sumatran orangutan).